The following is a 347-amino-acid chain: MKRRKWLNITWAVTIYIFFGMINVSSYNEGRKRKNKMYSFVINGYNEYKNKYSFLRKPKNVVHMENNNFDMDRLSLLKNLEEESKIITEGEGWDKTHPLLEIKDLHAIEIEGEKEILKGINLEIYLGEKHTIMGRNGSGKSTLAKVIAGHPYYKITKGIIKYKGLDLINLPVNVRSLCGIFLAFQYPVELPMVKNNEFLRAALNSHRRHRNEEEISVSEFNLMMIEEIKKVGLSSEFLDRPVNYGFSGGEKKRNEILQMLILKPTFCILDETDSGLDVDSFKLTSNVITNFSNDNNSFLIVTHYKKLLELLKPNFIHIMHQGKIIESGDFSLVDKIENKGYSQFLKE.

Residues 100–346 (LEIKDLHAIE…ENKGYSQFLK (247 aa)) enclose the ABC transporter domain. 134–141 (GRNGSGKS) is an ATP binding site.

Belongs to the ABC transporter superfamily. Ycf16 family. Component of a complex composed of SufB, SufC and SufD in a stoichiometric ratio of 1:2:1. Interacts with SufB. Interacts with SufD; the interaction enhances the ATPase activity of SufC. Proteolytically cleaved.

Its subcellular location is the plastid. The protein resides in the apicoplast. The catalysed reaction is ATP + H2O = ADP + phosphate + H(+). Its pathway is cofactor biosynthesis; iron-sulfur cluster biosynthesis. Participates in the sulfur mobilization (SUF) pathway for iron-sulfur (Fe-S) cluster biogenesis. As part of a complex consisting of SufB-SufC(2)-SufD, involved in assembly of [4Fe-4S] clusters. Exhibits ATPase activity. This is Iron-sulfur cluster assembly protein SufC from Plasmodium falciparum (isolate 3D7).